The sequence spans 200 residues: Large ribosomal subunit protein uL4 (200 aa).

Residues 38 to 72 form a disordered region; that stretch reads GRQGTKQQKTRSDVAGGGKRPWRQKGTGRARAGTT.

Belongs to the universal ribosomal protein uL4 family. Part of the 50S ribosomal subunit.

One of the primary rRNA binding proteins, this protein initially binds near the 5'-end of the 23S rRNA. It is important during the early stages of 50S assembly. It makes multiple contacts with different domains of the 23S rRNA in the assembled 50S subunit and ribosome. Its function is as follows. Forms part of the polypeptide exit tunnel. The chain is Large ribosomal subunit protein uL4 from Pseudomonas putida (strain ATCC 700007 / DSM 6899 / JCM 31910 / BCRC 17059 / LMG 24140 / F1).